The chain runs to 404 residues: Inosine-5'-monophosphate dehydrogenase (404 aa).

Residues Asp-172 and 222-224 (GIG) each bind NAD(+). Residues Gly-224 and Gly-226 each coordinate K(+). Ser-227 is a binding site for IMP. Cys-229 is a K(+) binding site. Cys-229 serves as the catalytic Thioimidate intermediate. Residues 262–264 (DGG), 285–286 (GN), and 309–313 (YVGMG) each bind IMP. The active-site Proton acceptor is Arg-325. Glu-340 serves as a coordination point for IMP. K(+) is bound by residues Glu-394, Ser-395, and His-396.

It belongs to the IMPDH/GMPR family. As to quaternary structure, homotetramer. The cofactor is K(+).

The catalysed reaction is IMP + NAD(+) + H2O = XMP + NADH + H(+). It participates in purine metabolism; XMP biosynthesis via de novo pathway; XMP from IMP: step 1/1. With respect to regulation, mycophenolic acid (MPA) is a non-competitive inhibitor that prevents formation of the closed enzyme conformation by binding to the same site as the amobile flap. In contrast, mizoribine monophosphate (MZP) is a competitive inhibitor that induces the closed conformation. MPA is a potent inhibitor of mammalian IMPDHs but a poor inhibitor of the bacterial enzymes. MZP is a more potent inhibitor of bacterial IMPDH. Catalyzes the conversion of inosine 5'-phosphate (IMP) to xanthosine 5'-phosphate (XMP), the first committed and rate-limiting step in the de novo synthesis of guanine nucleotides, and therefore plays an important role in the regulation of cell growth. Essential for mouse infection by tick bite and critical for the survival in environments that appear to lack sufficient amounts of guanine, guanosine, and/or deoxyguanosine to support spirochete growth, such as mammalian host tissues. In Borreliella burgdorferi (strain ATCC 35210 / DSM 4680 / CIP 102532 / B31) (Borrelia burgdorferi), this protein is Inosine-5'-monophosphate dehydrogenase.